Reading from the N-terminus, the 232-residue chain is Homeobox protein Rhox13 (232 aa).

A disordered region spans residues Gln45 to Val114. Residues Ser68–Glu105 are compositionally biased toward acidic residues. The segment at residues Arg148–Glu207 is a DNA-binding region (homeobox).

Belongs to the paired-like homeobox family.

Its subcellular location is the nucleus. Its function is as follows. Probable transcription factor. The protein is Homeobox protein Rhox13 of Mus musculus (Mouse).